A 385-amino-acid chain; its full sequence is Putative mitochondrial carrier protein TRV_02148.2 (385 aa).

Solcar repeat units follow at residues 24–124 (SNTL…LHAR) and 130–210 (RTAG…LRRR). A run of 5 helical transmembrane segments spans residues 30 to 47 (GTAI…DSIL), 132 to 150 (AGNE…KLFT), 184 to 207 (WSAY…YLAL), 263 to 279 (YTIC…LEVI), and 294 to 310 (VVTV…LYML).

Belongs to the mitochondrial carrier (TC 2.A.29) family.

Its subcellular location is the mitochondrion inner membrane. May function as a mitochondrial transporter. The polypeptide is Putative mitochondrial carrier protein TRV_02148.2 (Trichophyton verrucosum (strain HKI 0517)).